The chain runs to 586 residues: Paxillin (586 aa).

N-acetylmethionine is present on Met1. An LD motif 1 motif is present at residues 3–15 (DLDALLADLESTT). Residues 13-138 (STTSHISKRP…PSPTVMSSSL (126 aa)) form a disordered region. A Phosphotyrosine; by PTK6 modification is found at Tyr31. Over residues 45 to 54 (VPPPVPPPPS) the composition is skewed to pro residues. Residues Ser83 and Ser85 each carry the phosphoserine modification. Residues 86-98 (PIYSSSTKNSSAS) show a composition bias toward low complexity. At Tyr88 the chain carries Phosphotyrosine. Ser106 bears the Phosphoserine mark. At Tyr118 the chain carries Phosphotyrosine; by PTK6. Residues Ser119, Ser126, and Ser130 each carry the phosphoserine modification. Positions 121 to 137 (PNKQKSAEPSPTVMSSS) are enriched in polar residues. Thr132 is subject to Phosphothreonine. 3 positions are modified to phosphoserine: Ser137, Ser140, and Ser143. The LD motif 2 signature appears at 144–156 (ELDRLLLELNAVQ). At Tyr210 the chain carries Phosphotyrosine. The tract at residues 220–241 (GGKAGPLMKEKPKRNGGRGLED) is disordered. Positions 245–257 (SVESLLDELENSV) match the LD motif 3 motif. At Ser259 the chain carries Phosphoserine. Residues 266–290 (VNQGEMSSPQRVTSSQQQTRISASS) form a disordered region. Position 273 is a phosphoserine; by CDK5 (Ser273). Residues Ser279, Ser287, Ser290, Ser301, Ser317, Ser327, and Ser335 each carry the phosphoserine modification. Residues 291–310 (ATRELDELMASLSDFKFMAQ) are required for binding to PARVA and ILK. Positions 294-305 (ELDELMASLSDF) match the LD motif 4 motif. Residues 309-329 (AQGKTGSSSPPGGLSKPGSQL) are disordered. The span at 310–329 (QGKTGSSSPPGGLSKPGSQL) shows a compositional bias: low complexity. The LD motif 5 motif lies at 328–340 (QLDSMLGSLQSDL). 3 consecutive LIM zinc-binding domains span residues 353-403 (CGAC…CEKD), 412-462 (CYYC…CRKD), and 471-521 (CGGC…CEVH). At Ser528 the chain carries Phosphoserine. One can recognise an LIM zinc-binding 4 domain in the interval 530–580 (CSGCQKPITGRCITAMAKKFHPEHFVCAFCLKQLNKGTFKEQNDKPYCQSC).

The protein belongs to the paxillin family. Interacts in vitro with VCL/vinculin as well as to the SH3 domain of SRC and, when tyrosine phosphorylated, to the SH2 domain of CRK. Interacts with GIT1. Interacts with NUDT16L1/SDOS. Interacts with PTK2/FAK1. Interacts with PTK2B/PYK2. Interacts with ASAP2. Interacts with unphosphorylated ITGA4. Interacts with RNF5. Interacts with PDCD10. Interacts with NEK3, the interaction is prolactin-dependent. Interacts with PTK6. Interacts with TGFB1I1. Interacts with SORBS1. Interacts with PARVB. Interacts (via LD motif 4) with PARVA/PARVIN. Interacts (via LD motif 4) with ILK. Interacts (via cytoplasmic domain) with CEACAM1; the interaction is phosphotyrosyl-dependent. Interacts with LIMA1; this complex stabilizes actin dynamics. Interacts with CD36 (via C-terminus). Interacts with TRIM15. Interacts with PAK4; PAK4 acts as a scaffold to suppport PAXI phosphorylation at Ser-301. Post-translationally, phosphorylated by MAPK1/ERK2. Phosphorylated on tyrosine residues during integrin-mediated cell adhesion, embryonic development, fibroblast transformation and following stimulation of cells by mitogens. Phosphorylation at Ser-273 by CDK5 reduces its interaction with PTK2/FAK1 in matrix-cell focal adhesions (MCFA) during oligodendrocytes (OLs) differentiation. Phosphorylation at Tyr-31 and Tyr-118 by PTK6 promote the activation of RAC1 via CRK/CrKII, thereby promoting migration and invasion. Phosphorylation at Ser-279 by SLK is required for PXN redistribution and cell motility. Phosphorylation at Ser-301 promotes focal adhesion disassembly during cell migration.

The protein localises to the cytoplasm. It is found in the cytoskeleton. Its subcellular location is the cell junction. It localises to the focal adhesion. The protein resides in the cell cortex. Cytoskeletal protein involved in actin-membrane attachment at sites of cell adhesion to the extracellular matrix (focal adhesion). Recruits other proteins such as TRIM15 to focal adhesion. This chain is Paxillin, found in Rattus norvegicus (Rat).